The chain runs to 187 residues: Adenine phosphoribosyltransferase (187 aa).

Belongs to the purine/pyrimidine phosphoribosyltransferase family. As to quaternary structure, homodimer.

It localises to the cytoplasm. The enzyme catalyses AMP + diphosphate = 5-phospho-alpha-D-ribose 1-diphosphate + adenine. The protein operates within purine metabolism; AMP biosynthesis via salvage pathway; AMP from adenine: step 1/1. Functionally, catalyzes a salvage reaction resulting in the formation of AMP, that is energically less costly than de novo synthesis. The chain is Adenine phosphoribosyltransferase from Yersinia pseudotuberculosis serotype O:3 (strain YPIII).